The chain runs to 625 residues: tRNA uridine 5-carboxymethylaminomethyl modification enzyme MnmG (625 aa).

FAD is bound by residues 13–18 (GGGHAG), valine 125, and serine 182. Residue 276-290 (GPRYCPSIEDKITRF) coordinates NAD(+). An FAD-binding site is contributed by glutamine 373.

Belongs to the MnmG family. In terms of assembly, homodimer. Heterotetramer of two MnmE and two MnmG subunits. FAD serves as cofactor.

It is found in the cytoplasm. Functionally, NAD-binding protein involved in the addition of a carboxymethylaminomethyl (cmnm) group at the wobble position (U34) of certain tRNAs, forming tRNA-cmnm(5)s(2)U34. In Lactococcus lactis subsp. cremoris (strain SK11), this protein is tRNA uridine 5-carboxymethylaminomethyl modification enzyme MnmG.